The primary structure comprises 317 residues: COP9 signalosome complex subunit 6b (317 aa).

The MPN domain occupies Phe11–Val164.

This sequence belongs to the peptidase M67A family. CSN6 subfamily. Component of the CSN complex, probably composed of CSN1, CSN2, CSN3, CSN4, CSN5 (CSN5A or CSN5B), CSN6 (CSN6A or CSN6B), CSN7 and CSN8. Interacts with itself. In the complex, it probably interacts directly with CSN4, CSN5A or CSN5B, and CSN7. Binds to the translation initiation factors TIF3E1.

The protein resides in the cytoplasm. It is found in the nucleus. In terms of biological role, component of the COP9 signalosome complex (CSN), a complex involved in various cellular and developmental processes such as photomorphogenesis and auxin and jasmonate responses. The CSN complex is an essential regulator of the ubiquitin (Ubl) conjugation pathway by mediating the deneddylation of the cullin subunits of SCF-type E3 ligase complexes, leading to decrease the Ubl ligase activity of SCF. It is involved in repression of photomorphogenesis in darkness by regulating the activity of COP1-containing Ubl ligase complexes. The complex is also required for degradation of PSIAA6 by regulating the activity of the Ubl ligase SCF-TIR complex. Essential for the structural integrity of the CSN holocomplex. The sequence is that of COP9 signalosome complex subunit 6b from Arabidopsis thaliana (Mouse-ear cress).